The chain runs to 1095 residues: DNA-directed RNA polymerase subunit beta'' (1095 aa).

Residues Cys220, Cys293, Cys300, and Cys303 each contribute to the Zn(2+) site.

Belongs to the RNA polymerase beta' chain family. RpoC2 subfamily. As to quaternary structure, in plastids the minimal PEP RNA polymerase catalytic core is composed of four subunits: alpha, beta, beta', and beta''. When a (nuclear-encoded) sigma factor is associated with the core the holoenzyme is formed, which can initiate transcription. The cofactor is Zn(2+).

It localises to the plastid. Its subcellular location is the chloroplast. The enzyme catalyses RNA(n) + a ribonucleoside 5'-triphosphate = RNA(n+1) + diphosphate. In terms of biological role, DNA-dependent RNA polymerase catalyzes the transcription of DNA into RNA using the four ribonucleoside triphosphates as substrates. This chain is DNA-directed RNA polymerase subunit beta'', found in Zygnema circumcarinatum (Green alga).